We begin with the raw amino-acid sequence, 311 residues long: Methionyl-tRNA formyltransferase (311 aa).

(6S)-5,6,7,8-tetrahydrofolate is bound at residue 109–112; that stretch reads SLLP.

Belongs to the Fmt family.

The enzyme catalyses L-methionyl-tRNA(fMet) + (6R)-10-formyltetrahydrofolate = N-formyl-L-methionyl-tRNA(fMet) + (6S)-5,6,7,8-tetrahydrofolate + H(+). In terms of biological role, attaches a formyl group to the free amino group of methionyl-tRNA(fMet). The formyl group appears to play a dual role in the initiator identity of N-formylmethionyl-tRNA by promoting its recognition by IF2 and preventing the misappropriation of this tRNA by the elongation apparatus. The sequence is that of Methionyl-tRNA formyltransferase from Kosmotoga olearia (strain ATCC BAA-1733 / DSM 21960 / TBF 19.5.1).